The primary structure comprises 113 residues: Putative pterin-4-alpha-carbinolamine dehydratase (113 aa).

This sequence belongs to the pterin-4-alpha-carbinolamine dehydratase family.

It catalyses the reaction (4aS,6R)-4a-hydroxy-L-erythro-5,6,7,8-tetrahydrobiopterin = (6R)-L-erythro-6,7-dihydrobiopterin + H2O. This is Putative pterin-4-alpha-carbinolamine dehydratase from Bordetella bronchiseptica (strain ATCC BAA-588 / NCTC 13252 / RB50) (Alcaligenes bronchisepticus).